Here is a 469-residue protein sequence, read N- to C-terminus: Tetratricopeptide repeat protein 38 (469 aa).

3 TPR repeats span residues 107-140 (REKLHVAAVETFADGNLPKAADLWERILQSHPTD), 179-212 (SYVKGMYSFGLLETNFYDQALKVAKEALAVERTD), and 251-284 (CHVYWHWALYLIEKGDYEAALTLYDNHIAPQCFA).

It belongs to the TTC38 family.

The chain is Tetratricopeptide repeat protein 38 (ttc38) from Xenopus laevis (African clawed frog).